A 296-amino-acid polypeptide reads, in one-letter code: NAD kinase (296 aa).

Catalysis depends on Asp72, which acts as the Proton acceptor. Residues Asp72 to Gly73, Asn146 to Asp147, Arg157, Lys174, Asp176, Thr187 to Ser192, and Gln247 each bind NAD(+).

It belongs to the NAD kinase family. A divalent metal cation is required as a cofactor.

The protein resides in the cytoplasm. The catalysed reaction is NAD(+) + ATP = ADP + NADP(+) + H(+). Functionally, involved in the regulation of the intracellular balance of NAD and NADP, and is a key enzyme in the biosynthesis of NADP. Catalyzes specifically the phosphorylation on 2'-hydroxyl of the adenosine moiety of NAD to yield NADP. This is NAD kinase from Pseudomonas fluorescens (strain Pf0-1).